We begin with the raw amino-acid sequence, 323 residues long: Methionyl-tRNA formyltransferase (323 aa).

Residue 113-116 coordinates (6S)-5,6,7,8-tetrahydrofolate; sequence SLLP.

It belongs to the Fmt family.

It carries out the reaction L-methionyl-tRNA(fMet) + (6R)-10-formyltetrahydrofolate = N-formyl-L-methionyl-tRNA(fMet) + (6S)-5,6,7,8-tetrahydrofolate + H(+). In terms of biological role, attaches a formyl group to the free amino group of methionyl-tRNA(fMet). The formyl group appears to play a dual role in the initiator identity of N-formylmethionyl-tRNA by promoting its recognition by IF2 and preventing the misappropriation of this tRNA by the elongation apparatus. The protein is Methionyl-tRNA formyltransferase of Porphyromonas gingivalis (strain ATCC 33277 / DSM 20709 / CIP 103683 / JCM 12257 / NCTC 11834 / 2561).